Here is a 525-residue protein sequence, read N- to C-terminus: DEAD-box ATP-dependent RNA helicase CshA (525 aa).

A Q motif motif is present at residues 2–30 (TTFRELGLSDSLLQSVESMGFEEATPIQA). Residues 33 to 203 (IPHALQGKDI…ERFMTEPQHI (171 aa)) form the Helicase ATP-binding domain. Position 46–53 (46–53 (AQTGTGKT)) interacts with ATP. Residues 151 to 154 (DEAD) carry the DEAD box motif. One can recognise a Helicase C-terminal domain in the interval 214 to 374 (NIQQFYLEVQ…RMDAPTLDEA (161 aa)). Residues 428 to 525 (TTPIALTSEP…RKHHSRKPQA (98 aa)) form a disordered region. Positions 458–503 (DGNRNRSRDGRGGDGRNRDRNRDGRNRDGNRDRNRDGGNRGRRGEG) are enriched in basic and acidic residues. Residues 515-525 (ERKHHSRKPQA) show a composition bias toward basic residues.

This sequence belongs to the DEAD box helicase family. CshA subfamily. As to quaternary structure, oligomerizes, may be a member of the RNA degradosome.

Its subcellular location is the cytoplasm. It carries out the reaction ATP + H2O = ADP + phosphate + H(+). DEAD-box RNA helicase possibly involved in RNA degradation. Unwinds dsRNA in both 5'- and 3'-directions, has RNA-dependent ATPase activity. The sequence is that of DEAD-box ATP-dependent RNA helicase CshA from Bacillus cereus (strain ATCC 10987 / NRS 248).